The chain runs to 445 residues: tRNA-2-methylthio-N(6)-dimethylallyladenosine synthase (445 aa).

Residues 7–121 form the MTTase N-terminal domain; the sequence is KHFYIKSFGC…LPELIEKAAS (115 aa). Positions 16, 52, 84, 156, 160, and 163 each coordinate [4Fe-4S] cluster. Residues 142–374 form the Radical SAM core domain; the sequence is RQVGASAFLT…QALLNQQQFD (233 aa). One can recognise a TRAM domain in the interval 377–438; that stretch reads QQTIGRKATV…PNSVKGQFLD (62 aa).

This sequence belongs to the methylthiotransferase family. MiaB subfamily. In terms of assembly, monomer. The cofactor is [4Fe-4S] cluster.

It localises to the cytoplasm. The catalysed reaction is N(6)-dimethylallyladenosine(37) in tRNA + (sulfur carrier)-SH + AH2 + 2 S-adenosyl-L-methionine = 2-methylsulfanyl-N(6)-dimethylallyladenosine(37) in tRNA + (sulfur carrier)-H + 5'-deoxyadenosine + L-methionine + A + S-adenosyl-L-homocysteine + 2 H(+). Functionally, catalyzes the methylthiolation of N6-(dimethylallyl)adenosine (i(6)A), leading to the formation of 2-methylthio-N6-(dimethylallyl)adenosine (ms(2)i(6)A) at position 37 in tRNAs that read codons beginning with uridine. This chain is tRNA-2-methylthio-N(6)-dimethylallyladenosine synthase, found in Zymomonas mobilis subsp. mobilis (strain ATCC 31821 / ZM4 / CP4).